Consider the following 78-residue polypeptide: UPF0349 protein GK2958 (78 aa).

Belongs to the UPF0349 family.

The chain is UPF0349 protein GK2958 from Geobacillus kaustophilus (strain HTA426).